The sequence spans 352 residues: C-C chemokine receptor type 5 (352 aa).

Residues 1–30 (MDYQVSSPTYDIDYYTSEPCQKVNVKQIAA) lie on the Extracellular side of the membrane. At tyrosine 3 the chain carries Sulfotyrosine. 2 O-linked (GalNAc...) serine glycosylation sites follow: serine 6 and serine 7. Sulfotyrosine is present on residues tyrosine 10, tyrosine 14, and tyrosine 15. Cystine bridges form between cysteine 20–cysteine 269 and cysteine 101–cysteine 178. Residues 31–58 (RLLPPLYSLVFIFGFVGNILVVLILINC) traverse the membrane as a helical segment. The Cytoplasmic segment spans residues 59–68 (KRLKSMTDIY). The helical transmembrane segment at 69–89 (LLNLAISDLFFLLTVPFWAHY) threads the bilayer. At 90-102 (AAAQWDFGNTMCQ) the chain is on the extracellular side. A helical membrane pass occupies residues 103–124 (LLTGLYFIGFFSGIFFIILLTI). At 125 to 141 (DRYLAIVHAVFALKART) the chain is on the cytoplasmic side. Residues 142–166 (VTFGVVTSVITWVVAVFASLPGIIF) form a helical membrane-spanning segment. Residues 167–198 (TRSQREGLHYTCSSHFPYSQYQFWKNFQTLKI) lie on the Extracellular side of the membrane. The helical transmembrane segment at 199 to 218 (VILGLVLPLLVMVICYSGIL) threads the bilayer. The Cytoplasmic portion of the chain corresponds to 219 to 235 (KTLLRCRNEKKRHRAVR). The helical transmembrane segment at 236 to 260 (LIFTIMIVYFLFWAPYNIVLLLNTF) threads the bilayer. Residues 261 to 277 (QEFFGLNNCSSSNRLDQ) lie on the Extracellular side of the membrane. Residues 278–301 (AMQVTETLGMTHCCINPIIYAFVG) form a helical membrane-spanning segment. Topologically, residues 302–352 (EKFRNYLLVFFQKHIAKRFCKCCRIFQQEAPERASSVYTRSTGEQEISVGL) are cytoplasmic. 3 S-palmitoyl cysteine lipidation sites follow: cysteine 321, cysteine 323, and cysteine 324. Residues serine 336, serine 337, serine 342, and serine 349 each carry the phosphoserine; by BARK1 modification.

It belongs to the G-protein coupled receptor 1 family. Interacts with PRAF2. Efficient ligand binding to CCL3/MIP-1alpha and CCL4/MIP-1beta requires sulfation, O-glycosylation and sialic acid modifications. Glycosylation on Ser-6 is required for efficient binding of CCL4. Interacts with GRK2. Interacts with ARRB1 and ARRB2. Interacts with CNIH4. Interacts with S100A4; this interaction stimulates T-lymphocyte chemotaxis. In terms of processing, sulfated on at least 2 of the N-terminal tyrosines. Sulfation is required for efficient binding of the chemokines, CCL3 and CCL4. Post-translationally, palmitoylation in the C-terminal is important for cell surface expression. Phosphorylation on serine residues in the C-terminal is stimulated by binding CC chemokines especially by APO-RANTES. In terms of processing, O-glycosylated, but not N-glycosylated. Ser-6 appears to be the major site even if Ser-7 may be also O-glycosylated. Also sialylated glycans present which contribute to chemokine binding. Thr-16 and Ser-17 may also be glycosylated and, if so, with small moieties such as a T-antigen.

The protein localises to the cell membrane. In terms of biological role, receptor for a number of inflammatory CC-chemokines including CCL3/MIP-1-alpha, CCL4/MIP-1-beta and RANTES and subsequently transduces a signal by increasing the intracellular calcium ion level. May play a role in the control of granulocytic lineage proliferation or differentiation. Participates in T-lymphocyte migration to the infection site by acting as a chemotactic receptor. This Colobus polykomos (Western black-and-white colobus monkey) protein is C-C chemokine receptor type 5 (CCR5).